A 1017-amino-acid chain; its full sequence is Anaphase-promoting complex subunit 5 (1017 aa).

TPR repeat units follow at residues Lys-30 to Leu-63, Asp-182 to Asp-214, Val-252 to Gln-286, Pro-337 to Arg-370, and Asn-508 to Ile-541. The segment covering Ile-451–Asn-525 has biased composition (low complexity). Disordered regions lie at residues Ile-451 to Gly-527 and Asn-617 to Asn-636. 5 TPR repeats span residues Leu-642–Gln-675, Val-756–Phe-790, Ala-838–Asp-871, Ser-876–Leu-908, and Lys-931–Ser-964.

Belongs to the APC5 family. In terms of assembly, the APC/C is composed of at least 13 subunits that stay tightly associated throughout the cell cycle: anapc1, anapc2, anapc3, anapc4, anapc5, anapc6, anapc7, anapc8, anapc10, anapc11, cdc20, cdc26 and cdh1.

It localises to the nucleus. The protein operates within protein modification; protein ubiquitination. In terms of biological role, component of the anaphase promoting complex/cyclosome (APC/C), a cell cycle-regulated E3 ubiquitin-protein ligase complex that controls progression through mitosis and the G1 phase of the cell cycle. The sequence is that of Anaphase-promoting complex subunit 5 (anapc5) from Dictyostelium discoideum (Social amoeba).